A 418-amino-acid polypeptide reads, in one-letter code: Dwarfin sma-2 (418 aa).

Residues 8-134 (KKITERLKWK…YKRVHATGVL (127 aa)) form the MH1 domain. Zn(2+) is bound by residues cysteine 62, cysteine 107, cysteine 119, and histidine 124. Residues 222–418 (WATVSYYELN…PTPRPISSIS (197 aa)) form the MH2 domain.

It belongs to the dwarfin/SMAD family.

Its subcellular location is the cytoplasm. The protein localises to the nucleus. Functionally, involved in TGF-beta pathway. Plays a role in male tail tip morphogenesis. The protein is Dwarfin sma-2 of Caenorhabditis elegans.